A 263-amino-acid chain; its full sequence is Taurine import ATP-binding protein TauB (263 aa).

The ABC transporter domain maps to 4 to 235 (LTAEAISLSF…RYAAGETVRS (232 aa)). 40–47 (GPSGCGKS) provides a ligand contact to ATP.

The protein belongs to the ABC transporter superfamily. Taurine importer (TC 3.A.1.17.1) family. In terms of assembly, the complex is composed of two ATP-binding proteins (TauB), two transmembrane proteins (TauC) and a solute-binding protein (TauA).

It is found in the cell inner membrane. The catalysed reaction is taurine(out) + ATP + H2O = taurine(in) + ADP + phosphate + H(+). In terms of biological role, part of the ABC transporter complex TauABC involved in taurine import. Responsible for energy coupling to the transport system. The chain is Taurine import ATP-binding protein TauB from Pseudomonas aeruginosa (strain ATCC 15692 / DSM 22644 / CIP 104116 / JCM 14847 / LMG 12228 / 1C / PRS 101 / PAO1).